The chain runs to 457 residues: Oxysterol-binding protein-related protein 3C (457 aa).

Disordered regions lie at residues 37-61 and 363-393; these read NEGV…KGRW and QGDL…KGQK. 2 stretches are compositionally biased toward basic and acidic residues: residues 47–61 and 370–391; these read GGKE…KGRW and GSEK…ETKG.

The protein belongs to the OSBP family. In terms of tissue distribution, expressed in roots, leaves, stems and flowers.

In terms of biological role, may be involved in the transport of sterols. The sequence is that of Oxysterol-binding protein-related protein 3C (ORP3C) from Arabidopsis thaliana (Mouse-ear cress).